Here is a 290-residue protein sequence, read N- to C-terminus: GTPase Era (290 aa).

The region spanning 2 to 169 is the Era-type G domain; sequence KSGFAAILGR…KNKIYENFSE (168 aa). Residues 10-17 are G1; sequence GRPSTGKS. 10-17 is a binding site for GTP; the sequence is GRPSTGKS. The tract at residues 36–40 is G2; it reads QTTRN. Residues 57-60 are G3; the sequence is DTPG. GTP-binding positions include 57-61 and 119-122; these read DTPGF and NKVD. The interval 119-122 is G4; sequence NKVD. The interval 148–150 is G5; the sequence is ISA. The region spanning 200–276 is the KH type-2 domain; it reads LKEELPYSLY…NLFLQVKLKK (77 aa).

The protein belongs to the TRAFAC class TrmE-Era-EngA-EngB-Septin-like GTPase superfamily. Era GTPase family. In terms of assembly, monomer.

Its subcellular location is the cytoplasm. The protein resides in the cell inner membrane. Functionally, an essential GTPase that binds both GDP and GTP, with rapid nucleotide exchange. Plays a role in 16S rRNA processing and 30S ribosomal subunit biogenesis and possibly also in cell cycle regulation and energy metabolism. The chain is GTPase Era from Borreliella afzelii (strain PKo) (Borrelia afzelii).